The sequence spans 328 residues: Alanine racemase (328 aa).

Residue lysine 33 is the Proton acceptor; specific for D-alanine of the active site. Lysine 33 is subject to N6-(pyridoxal phosphate)lysine. Arginine 118 provides a ligand contact to substrate. Tyrosine 237 acts as the Proton acceptor; specific for L-alanine in catalysis. A substrate-binding site is contributed by methionine 283.

Belongs to the alanine racemase family. Requires pyridoxal 5'-phosphate as cofactor.

It catalyses the reaction L-alanine = D-alanine. It functions in the pathway amino-acid biosynthesis; D-alanine biosynthesis; D-alanine from L-alanine: step 1/1. Its function is as follows. Catalyzes the interconversion of L-alanine and D-alanine. May also act on other amino acids. This Campylobacter jejuni subsp. jejuni serotype O:23/36 (strain 81-176) protein is Alanine racemase (alr).